The sequence spans 157 residues: 6,7-dimethyl-8-ribityllumazine synthase 1 (157 aa).

Residues F22, 53–55, and 82–84 contribute to the 5-amino-6-(D-ribitylamino)uracil site; these read ALE and TVI. 87 to 88 provides a ligand contact to (2S)-2-hydroxy-3-oxobutyl phosphate; the sequence is ET. H90 serves as the catalytic Proton donor. N115 is a 5-amino-6-(D-ribitylamino)uracil binding site. R129 contacts (2S)-2-hydroxy-3-oxobutyl phosphate.

The protein belongs to the DMRL synthase family. Homopentamer.

The catalysed reaction is (2S)-2-hydroxy-3-oxobutyl phosphate + 5-amino-6-(D-ribitylamino)uracil = 6,7-dimethyl-8-(1-D-ribityl)lumazine + phosphate + 2 H2O + H(+). The protein operates within cofactor biosynthesis; riboflavin biosynthesis; riboflavin from 2-hydroxy-3-oxobutyl phosphate and 5-amino-6-(D-ribitylamino)uracil: step 1/2. In terms of biological role, catalyzes the formation of 6,7-dimethyl-8-ribityllumazine by condensation of 5-amino-6-(D-ribitylamino)uracil with 3,4-dihydroxy-2-butanone 4-phosphate. This is the penultimate step in the biosynthesis of riboflavin. The chain is 6,7-dimethyl-8-ribityllumazine synthase 1 (ribH1) from Brucella melitensis biotype 1 (strain ATCC 23456 / CCUG 17765 / NCTC 10094 / 16M).